The chain runs to 217 residues: Phosphatidylserine decarboxylase proenzyme (217 aa).

The active-site Schiff-base intermediate with substrate; via pyruvic acid is Ser-182. A Pyruvic acid (Ser); by autocatalysis modification is found at Ser-182.

This sequence belongs to the phosphatidylserine decarboxylase family. PSD-A subfamily. Heterodimer of a large membrane-associated beta subunit and a small pyruvoyl-containing alpha subunit. Pyruvate is required as a cofactor. In terms of processing, is synthesized initially as an inactive proenzyme. Formation of the active enzyme involves a self-maturation process in which the active site pyruvoyl group is generated from an internal serine residue via an autocatalytic post-translational modification. Two non-identical subunits are generated from the proenzyme in this reaction, and the pyruvate is formed at the N-terminus of the alpha chain, which is derived from the carboxyl end of the proenzyme. The post-translation cleavage follows an unusual pathway, termed non-hydrolytic serinolysis, in which the side chain hydroxyl group of the serine supplies its oxygen atom to form the C-terminus of the beta chain, while the remainder of the serine residue undergoes an oxidative deamination to produce ammonia and the pyruvoyl prosthetic group on the alpha chain.

It localises to the cell membrane. The enzyme catalyses a 1,2-diacyl-sn-glycero-3-phospho-L-serine + H(+) = a 1,2-diacyl-sn-glycero-3-phosphoethanolamine + CO2. The protein operates within phospholipid metabolism; phosphatidylethanolamine biosynthesis; phosphatidylethanolamine from CDP-diacylglycerol: step 2/2. Functionally, catalyzes the formation of phosphatidylethanolamine (PtdEtn) from phosphatidylserine (PtdSer). The chain is Phosphatidylserine decarboxylase proenzyme from Nitratidesulfovibrio vulgaris (strain ATCC 29579 / DSM 644 / CCUG 34227 / NCIMB 8303 / VKM B-1760 / Hildenborough) (Desulfovibrio vulgaris).